We begin with the raw amino-acid sequence, 500 residues long: Glutamyl-tRNA(Gln) amidotransferase subunit A (500 aa).

Residues K93 and S168 each act as charge relay system in the active site. S192 acts as the Acyl-ester intermediate in catalysis.

This sequence belongs to the amidase family. GatA subfamily. As to quaternary structure, heterotrimer of A, B and C subunits.

It carries out the reaction L-glutamyl-tRNA(Gln) + L-glutamine + ATP + H2O = L-glutaminyl-tRNA(Gln) + L-glutamate + ADP + phosphate + H(+). Its function is as follows. Allows the formation of correctly charged Gln-tRNA(Gln) through the transamidation of misacylated Glu-tRNA(Gln) in organisms which lack glutaminyl-tRNA synthetase. The reaction takes place in the presence of glutamine and ATP through an activated gamma-phospho-Glu-tRNA(Gln). The protein is Glutamyl-tRNA(Gln) amidotransferase subunit A of Corynebacterium jeikeium (strain K411).